We begin with the raw amino-acid sequence, 286 residues long: MSCVDQIVKTFADLTEGDREAAMRAFSMMMRTEPVRQTPAAKKKVNGFMSFRSYYSPLFSQLPQKERSPFMTILWQHDPFHNEWNFMCSVYSSIRTYLEQEKVTLQLWIHYRVRHLGVIIRDNYMASFGWNLVQLPNGTHDLERTALPLVQHNLQPMNGLCLFTKCLESGLPLANPHPVIAKLSDPSYDMIWFNKRPHRQQGHAGQTYNSELGVSALFPCNHAVAAAVDGITDLPLSHWLQQGDFGTEAGFSPQFETLLDSILENGNASINDPYNMALGMGVPMMG.

The alpha box DNA-binding region spans 40–95 (AAKKKVNGFMSFRSYYSPLFSQLPQKERSPFMTILWQHDPFHNEWNFMCSVYSSIR).

It belongs to the MATALPHA1 family.

The protein resides in the nucleus. Required for expression of the heterokaryon incompatibility and sexual functions. The protein is Mating type protein A-1 (MTA-1) of Neurospora africana.